The following is a 469-amino-acid chain: Adenosylhomocysteinase (469 aa).

Substrate contacts are provided by threonine 63, aspartate 139, and glutamate 164. Residue 165-167 (TTT) coordinates NAD(+). Residues lysine 194 and aspartate 198 each contribute to the substrate site. NAD(+) is bound by residues asparagine 199, 228-233 (GYGDVG), glutamate 251, asparagine 300, 321-323 (IGH), and asparagine 375.

The protein belongs to the adenosylhomocysteinase family. It depends on NAD(+) as a cofactor.

The protein localises to the cytoplasm. It carries out the reaction S-adenosyl-L-homocysteine + H2O = L-homocysteine + adenosine. It participates in amino-acid biosynthesis; L-homocysteine biosynthesis; L-homocysteine from S-adenosyl-L-homocysteine: step 1/1. In terms of biological role, may play a key role in the regulation of the intracellular concentration of adenosylhomocysteine. In Pseudomonas aeruginosa (strain LESB58), this protein is Adenosylhomocysteinase.